The primary structure comprises 88 residues: Pigment dispersing factor homolog pdf-1 (88 aa).

An N-terminal signal peptide occupies residues 1–21 (MNRFIISMIALLAVFCAVSTA).

It is found in the secreted. In terms of biological role, probable ligand of isoforms a and b of the calcitonin receptor-like protein, pdfr-1, a G-protein coupled receptor. May not signal through isoform c of pdfr-1. Involved in locomotion; more specifically mate searching behavior of males, independent of nutritional status. Involved in regulating the male-specific expression of TGFbeta-like daf-7 in the ASJ chemosensory neurons. Plays a role in circadian rhythms of locomotor activity. Involved in mediating arousal from the sleep-like state called lethargus, which occurs during molting between larval and adult stages, in part by regulating touch sensitivity, and working in concert with neuropeptide flp-2. In the presence of food, plays a role in initiating and extending exploratory roaming behavior, in opposition to 5-hydroxytryptamine (serotonin) signaling. The chain is Pigment dispersing factor homolog pdf-1 from Caenorhabditis elegans.